Consider the following 475-residue polypeptide: ATP synthase subunit beta, chloroplastic (475 aa).

155–162 contributes to the ATP binding site; that stretch reads GGAGVGKT.

It belongs to the ATPase alpha/beta chains family. F-type ATPases have 2 components, CF(1) - the catalytic core - and CF(0) - the membrane proton channel. CF(1) has five subunits: alpha(3), beta(3), gamma(1), delta(1), epsilon(1). CF(0) has four main subunits: a(1), b(1), b'(1) and c(9-12).

The protein localises to the plastid. Its subcellular location is the chloroplast thylakoid membrane. It catalyses the reaction ATP + H2O + 4 H(+)(in) = ADP + phosphate + 5 H(+)(out). Its function is as follows. Produces ATP from ADP in the presence of a proton gradient across the membrane. The catalytic sites are hosted primarily by the beta subunits. This is ATP synthase subunit beta, chloroplastic from Pyropia yezoensis (Susabi-nori).